Reading from the N-terminus, the 389-residue chain is Acyl-[acyl-carrier-protein] dehydrogenase MbtN (389 aa).

The protein belongs to the acyl-CoA dehydrogenase family. FAD is required as a cofactor.

It participates in siderophore biosynthesis; mycobactin biosynthesis. Catalyzes the dehydrogenation at the alpha-beta position of ACP-bound acyl chains. This results in the introduction of a double bond in the lipidic chain, which is further transferred to the epsilon-amino group of lysine residue in the mycobactin core by MbtK. The chain is Acyl-[acyl-carrier-protein] dehydrogenase MbtN (mbtN) from Mycobacterium sp. (strain MCS).